The following is a 380-amino-acid chain: Ceramide synthase 2 (380 aa).

Topologically, residues 1–40 (MLQTLHDYFWWERLWLPVNLTWADLEDRDGRVYAKASDLY) are lumenal. The N-linked (GlcNAc...) asparagine glycan is linked to N19. Residues 41–61 (ITLPLALLFLIIRYFFELYVA) form a helical membrane-spanning segment. The homeobox-like stretch occupies residues 67 to 128 (LLNVKEKTRL…RRRRNQDRPS (62 aa)). Residues 131 to 332 (KKFREASWRF…ILRMAHKFIT (202 aa)) enclose the TLC domain. The next 4 membrane-spanning stretches (helical) occupy residues 140 to 160 (FTFYLIAFIAGTAVIVDKPWF), 181 to 201 (WYYMIELSFYWSLLFSIASDV), 209 to 229 (QIIHHVATIILISFSWFANYV), and 264 to 284 (IFIVFAIVFIITRLVILPFWI). Positions 291-300 (YPLELYPAFF) match the Last loop motif motif. The chain crosses the membrane as a helical span at residues 304–324 (FFNFMMGVLQLLHIFWAYLIL). The Cytoplasmic segment spans residues 325-380 (RMAHKFITGKVVEDERSDREETESSEGEEAAAGGGAKNRPLANGHPILNNNHRKND). The interval 338–380 (DERSDREETESSEGEEAAAGGGAKNRPLANGHPILNNNHRKND) is disordered. S341 carries the post-translational modification Phosphoserine. A compositionally biased stretch (acidic residues) spans 344-353 (EETESSEGEE). T346 bears the Phosphothreonine mark. Residues S348 and S349 each carry the phosphoserine modification.

As to quaternary structure, interacts with ATP6V0C, ASGR1, ASGR2 and SLC22A1/OCT1. Interacts with ELOV1, HSD17B12 and TECR. Interacts with NDUFS2. Post-translationally, acetylated. Deacetylation by SIRT3 increases enzyme activity and promotes mitochondrial ceramide accumulation. Phosphorylated at the C-terminus by CK2, leading to increase the ceramide synthase activity.

The protein localises to the endoplasmic reticulum membrane. The enzyme catalyses a very long-chain fatty acyl-CoA + a sphingoid base = an N-(very-long-chain fatty acyl)-sphingoid base + CoA + H(+). The catalysed reaction is docosanoyl-CoA + sphinganine = N-docosanoylsphinganine + CoA + H(+). It carries out the reaction tetracosanoyl-CoA + sphinganine = N-tetracosanoylsphinganine + CoA + H(+). It catalyses the reaction hexacosanoyl-CoA + sphinganine = N-hexacosanoylsphinganine + CoA + H(+). The enzyme catalyses (15Z)-tetracosenoyl-CoA + sphinganine = N-(15Z-tetracosenoyl)-sphinganine + CoA + H(+). The catalysed reaction is 2-hydroxytetracosanoyl-CoA + sphinganine = N-(2-hydroxytetracosanoyl)-sphinganine + CoA + H(+). It carries out the reaction 2-hydroxydocosanoyl-CoA + sphinganine = N-(2-hydroxydocosanoyl)-sphinganine + CoA + H(+). It catalyses the reaction 2-hydroxytetracosenoyl-CoA + sphinganine = N-(2-hydroxytetracosenoyl)-sphinganine + CoA + H(+). The enzyme catalyses tetracosenoyl-CoA + sphinganine = an N-tetracosenoylsphinganine + CoA + H(+). The catalysed reaction is hexacosenoyl-CoA + sphinganine = N-hexacosenoylsphinganine + CoA + H(+). It carries out the reaction tetracosanoyl-CoA + sphing-4-enine = N-tetracosanoyl-sphing-4-enine + CoA + H(+). It catalyses the reaction tetracosenoyl-CoA + sphing-4-enine = N-(tetracosenoyl)-sphing-4-enine + CoA + H(+). The enzyme catalyses heptadecasphing-4-enine + tetracosanoyl-CoA = N-tetracosanoyl-heptadecasphing-4-enine + CoA + H(+). The catalysed reaction is a fatty acyl-CoA + sphing-4-enine = an N-acylsphing-4-enine + CoA + H(+). It carries out the reaction sphing-4-enine + hexadecanoyl-CoA = N-hexadecanoylsphing-4-enine + CoA + H(+). It catalyses the reaction sphing-4-enine + octadecanoyl-CoA = N-octadecanoylsphing-4-enine + CoA + H(+). The enzyme catalyses eicosanoyl-CoA + sphing-4-enine = N-eicosanoyl-sphing-4-enine + CoA + H(+). The catalysed reaction is sphinganine + hexadecanoyl-CoA = N-hexadecanoylsphinganine + CoA + H(+). It carries out the reaction sphinganine + octadecanoyl-CoA = N-(octadecanoyl)-sphinganine + CoA + H(+). It catalyses the reaction sphinganine + (9Z)-octadecenoyl-CoA = N-(9Z-octadecenoyl)-sphinganine + CoA + H(+). The enzyme catalyses eicosanoyl-CoA + sphinganine = N-eicosanoylsphinganine + CoA + H(+). It participates in lipid metabolism; sphingolipid metabolism. Its activity is regulated as follows. Ceramide synthase activity is inhibited by sphingosine-1-phosphate. Ceramide synthase that catalyzes the transfer of the acyl chain from acyl-CoA to a sphingoid base, with high selectivity toward very-long-chain fatty acyl-CoA (chain length C22-C27). N-acylates sphinganine and sphingosine bases to form dihydroceramides and ceramides in de novo synthesis and salvage pathways, respectively. Plays a non-redundant role in the synthesis of ceramides with very-long-chain fatty acids in kidney, liver and brain. Regulates the abundance of myelin-specific sphingolipids galactosylceramide and sulfatide that affects myelin sheath architecture and motor neuron functions. The sequence is that of Ceramide synthase 2 from Bos taurus (Bovine).